Consider the following 59-residue polypeptide: Ferredoxin-2 (59 aa).

4Fe-4S ferredoxin-type domains follow at residues 3–32 (YSVI…LQNG) and 33–59 (KAVP…AIVE). 8 residues coordinate [4Fe-4S] cluster: Cys-12, Cys-15, Cys-18, Cys-22, Cys-42, Cys-45, Cys-48, and Cys-52.

As to quaternary structure, homodimer. It depends on [4Fe-4S] cluster as a cofactor.

It localises to the periplasm. Ferredoxins are iron-sulfur proteins that transfer electrons in a wide variety of metabolic reactions. This Desulfomicrobium norvegicum (strain DSM 1741 / NCIMB 8310) (Desulfovibrio baculatus (strain Norway 4)) protein is Ferredoxin-2.